We begin with the raw amino-acid sequence, 622 residues long: Protein translocase subunit SecD (622 aa).

6 helical membrane-spanning segments follow: residues 6–26 (FKIG…YPTV), 460–480 (AGLR…IFYY), 485–505 (MIAD…LAAF), 512–532 (PGIA…VLIF), 559–579 (AIFD…SFGV), and 584–604 (GFAV…IVIT).

The protein belongs to the SecD/SecF family. SecD subfamily. As to quaternary structure, forms a complex with SecF. Part of the essential Sec protein translocation apparatus which comprises SecA, SecYEG and auxiliary proteins SecDF. Other proteins may also be involved.

Its subcellular location is the cell inner membrane. Functionally, part of the Sec protein translocase complex. Interacts with the SecYEG preprotein conducting channel. SecDF uses the proton motive force (PMF) to complete protein translocation after the ATP-dependent function of SecA. The chain is Protein translocase subunit SecD from Rhodothermus marinus (strain ATCC 43812 / DSM 4252 / R-10) (Rhodothermus obamensis).